Reading from the N-terminus, the 1119-residue chain is Transcriptional repressor NF-X1 homolog (1119 aa).

Positions 1–214 (MADTEGTSSS…EPLTEEETKI (214 aa)) are disordered. The segment covering 7–17 (TSSSIPTSTNS) has biased composition (low complexity). Over residues 18–29 (SRHRASRGRGGR) the composition is skewed to basic residues. Low complexity predominate over residues 84 to 98 (ANFTFNPNAATFNPA). Residues 113–128 (GASTHSNQNSRQQEPS) show a composition bias toward polar residues. Over residues 143–154 (RQLEIQEQRGDS) the composition is skewed to basic and acidic residues. The span at 157-167 (QNQSRQNNRNQ) shows a compositional bias: low complexity. The span at 174-193 (ANQQNKSVQNPSRNPGNSRR) shows a compositional bias: polar residues. The span at 198–214 (RRREQKEEPLTEEETKI) shows a compositional bias: basic and acidic residues. The RING-type; degenerate zinc finger occupies 235 to 287 (CAICYTRITTRQGVWSCKTCYHIFHISTGCITDWARSSRDKEGANTWRCPTCQ). 9 consecutive NF-X1-type zinc fingers follow at residues 330-348 (CPHPCTELCHPGPCIECKL), 383-402 (CGQHNCERICHSGDCGECTV), 439-458 (CGIHHCTKKCHDKECGECET), 500-523 (CGTPGKNHHCREKCHEGPCPPCNL), 565-584 (CGMHKCQEVCCIQDEHFCLQ), 592-611 (CGIHTCENVCHAGQCRPCLQ), 649-668 (CDHSVSHKCHGEQNCPPCTQ), 703-726 (CGVHVCQRTCHGEECEKEGEKCTK), and 735-756 (CEHPCALPCHEDSPCEPSPCKA). The region spanning 867–937 (IDFVKSVEKI…KRSIVLTAVR (71 aa)) is the R3H domain. Disordered regions lie at residues 1024–1047 (VDSDDEESNVPTTSNLVSSPPKDW) and 1078–1119 (AAKK…ELLE). Residues 1032–1041 (NVPTTSNLVS) are compositionally biased toward polar residues. Residues 1086–1097 (PTWEDQCDEDAP) are compositionally biased toward acidic residues.

The protein belongs to the NFX1 family.

The protein localises to the nucleus. May play a role in transcription regulation. The sequence is that of Transcriptional repressor NF-X1 homolog (nfx-1) from Caenorhabditis elegans.